The primary structure comprises 1007 residues: Beta-galactosidase (1007 aa).

Residues 29–48 form a disordered region; the sequence is TIPPHSDHESFQSQEELEEG. Residue E465 is the Proton donor of the active site. E532 functions as the Nucleophile in the catalytic mechanism.

The protein belongs to the glycosyl hydrolase 2 family. In terms of assembly, monomer.

The catalysed reaction is Hydrolysis of terminal non-reducing beta-D-galactose residues in beta-D-galactosides.. The protein is Beta-galactosidase (lacZ) of Lactobacillus delbrueckii subsp. bulgaricus.